A 43-amino-acid chain; its full sequence is uncharacterized protein (43 aa).

Belongs to the ELIP/psbS family.

The protein localises to the plastid. Its subcellular location is the chloroplast. Its function is as follows. Possible role in chlorophyll and/or carotenoid binding. This is an uncharacterized protein from Cyanidium caldarium (Red alga).